The chain runs to 126 residues: Protein ApaG (126 aa).

One can recognise an ApaG domain in the interval 2 to 126 (KQLESSIRIE…FRLAAPGLLH (125 aa)).

The chain is Protein ApaG from Shewanella loihica (strain ATCC BAA-1088 / PV-4).